Reading from the N-terminus, the 159-residue chain is Ribosomal RNA large subunit methyltransferase H (159 aa).

Residues Leu76, Gly108, and 127–132 (FSKMTF) contribute to the S-adenosyl-L-methionine site.

The protein belongs to the RNA methyltransferase RlmH family. Homodimer.

It is found in the cytoplasm. The enzyme catalyses pseudouridine(1915) in 23S rRNA + S-adenosyl-L-methionine = N(3)-methylpseudouridine(1915) in 23S rRNA + S-adenosyl-L-homocysteine + H(+). Specifically methylates the pseudouridine at position 1915 (m3Psi1915) in 23S rRNA. This Exiguobacterium sp. (strain ATCC BAA-1283 / AT1b) protein is Ribosomal RNA large subunit methyltransferase H.